Reading from the N-terminus, the 47-residue chain is PhoP/PhoQ regulator MgrB (47 aa).

Residues 6–26 traverse the membrane as a helical segment; it reads WVILIIVLIACVILWTQTINV.

Belongs to the MgrB family. In terms of assembly, may form homooligomers. Probably interacts with the periplasmic domain of PhoQ.

It localises to the cell inner membrane. PhoP-regulated transcription is redox-sensitive, being activated when the periplasm becomes more reducing. MgrB acts between DsbA/DsbB and PhoP/PhoQ in this pathway. Represses PhoP/PhoQ signaling, possibly by binding to the periplasmic domain of PhoQ, altering its activity and that of downstream effector PhoP. This is PhoP/PhoQ regulator MgrB from Enterobacter sp. (strain 638).